Here is a 245-residue protein sequence, read N- to C-terminus: Farnesol dehydrogenase (245 aa).

NAD(+) contacts are provided by residues 11-40 and Asp64; that span reads VTGASSGIGAAITTDLAKAGMVVVGLARRV. Position 145 (Ser145) interacts with substrate. Residue Tyr160 is the Proton acceptor of the active site. Position 164 (Lys164) interacts with NAD(+).

This sequence belongs to the short-chain dehydrogenases/reductases (SDR) family. As to quaternary structure, homodimer. As to expression, highly expressed level in the midgut and brain in adult females, and at lower level in the abdominal and thoracic ganglia. High levels are detected in corpora allata (CA), Malpighian tubules and fat body.

The enzyme catalyses (2E,6E)-farnesol + NADP(+) = (2E,6E)-farnesal + NADPH + H(+). Mediates oxidation of farnesol into farnesal, a precursor of juvenile hormone in the corpora allata (CA), the glands that synthesize juvenile hormone. Able to oxidize C(10) to C(15) isoprenoid and aliphatic alcohols. This Aedes aegypti (Yellowfever mosquito) protein is Farnesol dehydrogenase.